A 643-amino-acid chain; its full sequence is 1-deoxy-D-xylulose-5-phosphate synthase (643 aa).

Thiamine diphosphate-binding positions include His89 and 130 to 132 (GHS). Residue Asp161 participates in Mg(2+) binding. Residues 162-163 (GA), Asn190, Phe297, and Glu380 each bind thiamine diphosphate. Asn190 is a Mg(2+) binding site.

It belongs to the transketolase family. DXPS subfamily. Homodimer. Requires Mg(2+) as cofactor. The cofactor is thiamine diphosphate.

It carries out the reaction D-glyceraldehyde 3-phosphate + pyruvate + H(+) = 1-deoxy-D-xylulose 5-phosphate + CO2. The protein operates within metabolic intermediate biosynthesis; 1-deoxy-D-xylulose 5-phosphate biosynthesis; 1-deoxy-D-xylulose 5-phosphate from D-glyceraldehyde 3-phosphate and pyruvate: step 1/1. Functionally, catalyzes the acyloin condensation reaction between C atoms 2 and 3 of pyruvate and glyceraldehyde 3-phosphate to yield 1-deoxy-D-xylulose-5-phosphate (DXP). The chain is 1-deoxy-D-xylulose-5-phosphate synthase from Hahella chejuensis (strain KCTC 2396).